Reading from the N-terminus, the 1030-residue chain is Peroxisomal ATPase PEX6 (1030 aa).

An AAA-cassette D1 region spans residues 478 to 683; that stretch reads VLLHSTTNNV…VETARMTATA (206 aa). The tract at residues 767 to 956 is AAA-cassette D2; sequence GILFYGPPGT…CSDAMLNAMS (190 aa). Residue 772 to 779 coordinates ATP; it reads GPPGTGKT.

This sequence belongs to the AAA ATPase family. In terms of assembly, interacts with PEX1; forming the PEX1-PEX6 AAA ATPase complex, which is composed of a heterohexamer formed by a trimer of PEX1-PEX6 dimers. Interacts with PEX15; anchors PEX1-PEX6 heterooligomers to the peroxisomal membrane and mediates their association with the peroxisomal importomer. Interacts with UBP15.

It localises to the cytoplasm. Its subcellular location is the cytosol. The protein localises to the peroxisome membrane. It catalyses the reaction ATP + H2O = ADP + phosphate + H(+). In terms of biological role, component of the PEX1-PEX6 AAA ATPase complex, a protein dislocase complex that mediates the ATP-dependent extraction of the PEX5 receptor from peroxisomal membranes, an essential step for PEX5 recycling. Specifically recognizes PEX5 monoubiquitinated at 'Cys-6', and pulls it out of the peroxisome lumen through the PEX2-PEX10-PEX12 retrotranslocation channel. Extraction by the PEX1-PEX6 AAA ATPase complex is accompanied by unfolding of the TPR repeats and release of bound cargo from PEX5. The chain is Peroxisomal ATPase PEX6 from Saccharomyces cerevisiae (strain ATCC 204508 / S288c) (Baker's yeast).